The primary structure comprises 399 residues: Elongation factor Tu (399 aa).

Positions Lys-10–Val-207 constitute a tr-type G domain. The G1 stretch occupies residues Gly-19–Thr-26. Gly-19–Thr-26 is a binding site for GTP. Thr-26 provides a ligand contact to Mg(2+). The interval Gly-60–Asn-64 is G2. Positions Asp-81–Gly-84 are G3. GTP-binding positions include Asp-81–His-85 and Asn-136–Asp-139. The segment at Asn-136 to Asp-139 is G4. A G5 region spans residues Ser-174–Leu-176.

The protein belongs to the TRAFAC class translation factor GTPase superfamily. Classic translation factor GTPase family. EF-Tu/EF-1A subfamily. In terms of assembly, monomer.

The protein localises to the cytoplasm. The enzyme catalyses GTP + H2O = GDP + phosphate + H(+). GTP hydrolase that promotes the GTP-dependent binding of aminoacyl-tRNA to the A-site of ribosomes during protein biosynthesis. This Pseudothermotoga lettingae (strain ATCC BAA-301 / DSM 14385 / NBRC 107922 / TMO) (Thermotoga lettingae) protein is Elongation factor Tu.